A 212-amino-acid polypeptide reads, in one-letter code: Leucine efflux protein (212 aa).

The next 6 helical transmembrane spans lie at 12-32 (TYLV…LFVL), 49-69 (GVFI…ATLI), 71-91 (TTPI…LYLG), 122-142 (ILSL…VQFI), 153-173 (FFIL…FLII), and 188-208 (LAKV…ARLA).

The protein belongs to the Rht family.

Its subcellular location is the cell inner membrane. The catalysed reaction is L-leucine(in) + H(+)(out) = L-leucine(out) + H(+)(in). Exporter of leucine. In Escherichia coli O6:K15:H31 (strain 536 / UPEC), this protein is Leucine efflux protein (leuE).